The sequence spans 761 residues: Semaphorin-3D (761 aa).

A signal peptide spans 1-24 (MRASQVPNACSLLSLAMLFFPVTG). A Sema domain is found at 32–519 (RLKLSYKDLL…SRDGLVQLSL (488 aa)). Cys105 and Cys116 are joined by a disulfide. N-linked (GlcNAc...) asparagine glycosylation is present at Asn127. 4 cysteine pairs are disulfide-bonded: Cys134-Cys143, Cys274-Cys386, Cys298-Cys346, and Cys522-Cys540. One can recognise an Ig-like C2-type domain in the interval 552–670 (PTSKRRARRQ…IHTIVKLNLN (119 aa)). N-linked (GlcNAc...) asparagine glycosylation occurs at Asn595. Cys653 and Cys719 form a disulfide bridge. The span at 728-754 (RRQRNKGGAKWKHVQEMKKKRNRRHHE) shows a compositional bias: basic residues. A disordered region spans residues 728–761 (RRQRNKGGAKWKHVQEMKKKRNRRHHEPARPPST).

This sequence belongs to the semaphorin family. In terms of tissue distribution, developing spinal cord and developing visual system. Collapsin-1, -2, -3, and -5 bind to overlapping but distinct axon tracts.

The protein localises to the secreted. Induces the collapse and paralysis of neuronal growth cones. Could potentially act as repulsive cues toward specific neuronal populations. Binds to neuropilin. The protein is Semaphorin-3D (SEMA3D) of Gallus gallus (Chicken).